We begin with the raw amino-acid sequence, 150 residues long: Ribonuclease K6 (150 aa).

Positions 1-23 (MVLCFPLLLLLLVLWGPVCLLHA) are cleaved as a signal peptide. The Proton acceptor role is filled by histidine 38. 4 disulfide bridges follow: cysteine 46/cysteine 104, cysteine 60/cysteine 114, cysteine 78/cysteine 129, and cysteine 85/cysteine 92. N-linked (GlcNAc...) asparagine glycosylation is present at asparagine 55. Substrate-binding positions include 61–65 (KHQNT) and lysine 86. The N-linked (GlcNAc...) asparagine glycan is linked to asparagine 100. Position 105 (arginine 105) interacts with substrate. The active-site Proton donor is the histidine 145.

It belongs to the pancreatic ribonuclease family. As to quaternary structure, interacts (via N-terminus) with bacterial lipopolysaccharide (LPS).

The protein localises to the secreted. It localises to the lysosome. Its subcellular location is the cytoplasmic granule. In terms of biological role, ribonuclease which shows a preference for the pyrimidines uridine and cytosine. Has potent antibacterial activity against a range of Gram-positive and Gram-negative bacteria, including P.aeruginosa, A.baumanii, M.luteus, S.aureus, E.faecalis, E.faecium, S.saprophyticus and E.coli. Causes loss of bacterial membrane integrity, and also promotes agglutination of Gram-negative bacteria. Probably contributes to urinary tract sterility. Bactericidal activity is independent of RNase activity. This chain is Ribonuclease K6 (RNASE6), found in Chlorocebus aethiops (Green monkey).